Consider the following 1404-residue polypeptide: DNA-directed RNA polymerase subunit beta' (1404 aa).

4 residues coordinate Zn(2+): cysteine 72, cysteine 74, cysteine 87, and cysteine 90. Mg(2+) contacts are provided by aspartate 463, aspartate 465, and aspartate 467. 4 residues coordinate Zn(2+): cysteine 811, cysteine 885, cysteine 892, and cysteine 895.

It belongs to the RNA polymerase beta' chain family. As to quaternary structure, the RNAP catalytic core consists of 2 alpha, 1 beta, 1 beta' and 1 omega subunit. When a sigma factor is associated with the core the holoenzyme is formed, which can initiate transcription. Mg(2+) is required as a cofactor. Requires Zn(2+) as cofactor.

The enzyme catalyses RNA(n) + a ribonucleoside 5'-triphosphate = RNA(n+1) + diphosphate. In terms of biological role, DNA-dependent RNA polymerase catalyzes the transcription of DNA into RNA using the four ribonucleoside triphosphates as substrates. The protein is DNA-directed RNA polymerase subunit beta' of Jannaschia sp. (strain CCS1).